The primary structure comprises 117 residues: ORF2 protein (117 aa).

A disordered region spans residues 43–104 (NLGRPPAPQP…AGDGGDGELA (62 aa)). The segment covering 79–98 (GTGGDAAGGEAGGSRGAGDG) has biased composition (gly residues).

This is ORF2 protein from Homo sapiens (Human).